The following is a 111-amino-acid chain: UPF0145 protein Bphy_3680 (111 aa).

The protein belongs to the UPF0145 family.

This chain is UPF0145 protein Bphy_3680, found in Paraburkholderia phymatum (strain DSM 17167 / CIP 108236 / LMG 21445 / STM815) (Burkholderia phymatum).